The primary structure comprises 450 residues: Putative mediator of RNA polymerase II transcription subunit 27 (450 aa).

Positions Gln15 to Val118 form a coiled coil.

Belongs to the Mediator complex subunit 27 family. In terms of assembly, component of the Mediator complex.

The protein localises to the nucleus. Its function is as follows. Component of the Mediator complex, a coactivator involved in the regulated transcription of nearly all RNA polymerase II-dependent genes. Mediator functions as a bridge to convey information from gene-specific regulatory proteins to the basal RNA polymerase II transcription machinery. Mediator is recruited to promoters by direct interactions with regulatory proteins and serves as a scaffold for the assembly of a functional preinitiation complex with RNA polymerase II and the general transcription factors. The polypeptide is Putative mediator of RNA polymerase II transcription subunit 27 (med27) (Dictyostelium discoideum (Social amoeba)).